The sequence spans 555 residues: Glucosylglycerate phosphorylase (555 aa).

Catalysis depends on Asp231, which acts as the Nucleophile.

The protein belongs to the glycosyl hydrolase 13 family. Glucosylglycerate phosphorylase subfamily.

It catalyses the reaction (2R)-2-O-(alpha-D-glucopyranosyl)-glycerate + phosphate = (R)-glycerate + alpha-D-glucose 1-phosphate. Its function is as follows. Catalyzes the reversible phosphorolysis of glucosylglycerate into alpha-D-glucose 1-phosphate (Glc1P) and D-glycerate. May be a regulator of intracellular levels of glucosylglycerate, a compatible solute that primarily protects organisms facing salt stress and very specific nutritional constraints. Has a very strict substrate specificity. Cannot catalyze the phosphorolysis of sucrose or synthesize sucrose from Glc1P and D-fructose. This is Glucosylglycerate phosphorylase from Allomeiothermus silvanus (strain ATCC 700542 / DSM 9946 / NBRC 106475 / NCIMB 13440 / VI-R2) (Thermus silvanus).